The chain runs to 341 residues: O(6)-methylguanine-induced apoptosis 2 (341 aa).

Polar residues predominate over residues Met-1 to Ser-10. Residues Met-1–Gly-23 form a disordered region. The span at Ile-12–Gly-23 shows a compositional bias: basic and acidic residues. STPGR repeat units follow at residues Pro-73–Val-80, Pro-115–Arg-123, Pro-154–Asn-160, Gly-194–Val-213, Gly-232–Lys-254, Leu-273–Tyr-284, and Leu-313–Ile-323. Residue Tyr-78 is modified to Phosphotyrosine.

The protein belongs to the STPG1 family.

Its subcellular location is the cytoplasm. It localises to the nucleus. May positively contribute to the induction of apoptosis triggered by O(6)-methylguanine. The sequence is that of O(6)-methylguanine-induced apoptosis 2 (Stpg1) from Rattus norvegicus (Rat).